Consider the following 413-residue polypeptide: uncharacterized protein (413 aa).

This is an uncharacterized protein from Mycobacterium tuberculosis (strain ATCC 25618 / H37Rv).